The following is a 673-amino-acid chain: Vasorin (673 aa).

An N-terminal signal peptide occupies residues 1 to 23 (MCSRVPLLLPLLLLLALGPGVQG). The LRRNT domain occupies 24–51 (CPSGCQCSQPQTVFCTARQGTTVPRDVP). Topologically, residues 24-575 (CPSGCQCSQP…VTQAREGNLP (552 aa)) are extracellular. LRR repeat units follow at residues 52 to 74 (PDTV…SFAG), 77 to 98 (GLQL…VFQP), 101 to 122 (NLSN…TFRG), 125 to 146 (RLER…AFDT), 149 to 170 (RLLE…RLPR), 171 to 191 (LLLL…ILDT), 193 to 214 (NVEA…LFSR), 217 to 238 (NLHD…IRGL), 240 to 262 (GLTR…DLAG), and 265 to 287 (ALQE…SGLF). N101 carries an N-linked (GlcNAc...) asparagine glycan. A glycan (N-linked (GlcNAc...) (complex) asparagine) is linked at N117. Residue N273 is glycosylated (N-linked (GlcNAc...) asparagine). In terms of domain architecture, LRRCT spans 298–351 (NPFNCVCPLSWFGPWVRESHVTLASPEETRCHFPPKNAGRLLLELDYADFGCPA). Low complexity predominate over residues 358–370 (VPTTRPVVREPTA). The interval 358 to 404 (VPTTRPVVREPTALSSSLAPTWLSPTEPATEAPSPPSTAPPTVGPVP) is disordered. A compositionally biased stretch (pro residues) spans 390 to 404 (PSPPSTAPPTVGPVP). The EGF-like domain occupies 405 to 442 (QPQDCPPSTCLNGGTCHLGTRHHLACLCPEGFTGLYCE). Intrachain disulfides connect C409–C420, C414–C430, and C432–C441. Residues 460 to 558 (PPRSLTLGIE…ACGEAHTPPA (99 aa)) enclose the Fibronectin type-III domain. N500 and N528 each carry an N-linked (GlcNAc...) asparagine glycan. A helical membrane pass occupies residues 576–596 (LLIAPALAAVLLAALAAVGAA). Topologically, residues 597–673 (YCVRRGRAMA…QSPLHAKPYI (77 aa)) are cytoplasmic.

As to quaternary structure, interacts with TGFB1, TGFB2 and TGFB3. Post-translationally, N-glycosylated. N-glycan heterogeneity at Asn-117: Hex5HexNAc4 (minor), dHex1Hex5HexNAc4 (major), Hex6HexNAc5 (minor) and dHex1Hex6HexNAc5 (minor). In terms of tissue distribution, expressed at highest levels in aorta, at intermediate levels in kidney and placenta and at lowest levels in brain, heart, liver, lung and skeletal muscle. Within the aorta, the strongest expression is found in the tunica media of the proximal ascending aorta, the descending thoracic aorta, the abdominal aorta and the coronary arteries. Within the kidney, expression is found in the interstitial cells.

It localises to the membrane. Its subcellular location is the secreted. Functionally, may act as an inhibitor of TGF-beta signaling. The chain is Vasorin (VASN) from Homo sapiens (Human).